We begin with the raw amino-acid sequence, 366 residues long: Phospho-N-acetylmuramoyl-pentapeptide-transferase (366 aa).

The next 10 membrane-spanning stretches (helical) occupy residues 3 to 23 (QIII…PVLI), 52 to 72 (MGGI…GIVG), 80 to 100 (LTAS…LGFA), 120 to 140 (LIGQ…FPNA), 161 to 181 (LAIG…YILI), 197 to 217 (LAAG…FWQF), 238 to 258 (LAIL…WNAA), 262 to 282 (IFMG…LSVA), 287 to 307 (LLMI…VIQV), and 341 to 361 (FWLI…GEWL).

It belongs to the glycosyltransferase 4 family. MraY subfamily. Mg(2+) is required as a cofactor.

It is found in the cell membrane. It carries out the reaction UDP-N-acetyl-alpha-D-muramoyl-L-alanyl-gamma-D-glutamyl-meso-2,6-diaminopimeloyl-D-alanyl-D-alanine + di-trans,octa-cis-undecaprenyl phosphate = di-trans,octa-cis-undecaprenyl diphospho-N-acetyl-alpha-D-muramoyl-L-alanyl-D-glutamyl-meso-2,6-diaminopimeloyl-D-alanyl-D-alanine + UMP. The protein operates within cell wall biogenesis; peptidoglycan biosynthesis. Catalyzes the initial step of the lipid cycle reactions in the biosynthesis of the cell wall peptidoglycan: transfers peptidoglycan precursor phospho-MurNAc-pentapeptide from UDP-MurNAc-pentapeptide onto the lipid carrier undecaprenyl phosphate, yielding undecaprenyl-pyrophosphoryl-MurNAc-pentapeptide, known as lipid I. The sequence is that of Phospho-N-acetylmuramoyl-pentapeptide-transferase from Corynebacterium diphtheriae (strain ATCC 700971 / NCTC 13129 / Biotype gravis).